A 270-amino-acid chain; its full sequence is Oxidized low-density lipoprotein receptor 1 (270 aa).

Over residues 1–14 (MTVDDPKGMKDQLD) the composition is skewed to basic and acidic residues. A disordered region spans residues 1 to 22 (MTVDDPKGMKDQLDQKPNGKTA). At 1-33 (MTVDDPKGMKDQLDQKPNGKTAKGFVSSWRWYP) the chain is on the cytoplasmic side. Residues 34-56 (AAVTLGVLCLGLLVTVILLILQL) form a helical; Signal-anchor for type II membrane protein membrane-spanning segment. Cysteine 42 carries the S-palmitoyl cysteine lipid modification. The segment at 57–146 (SQVSDLIKKQ…SGPCPQDWLW (90 aa)) is neck. At 57-270 (SQVSDLIKKQ…QKKANLLRAQ (214 aa)) the chain is on the extracellular side. N-linked (GlcNAc...) asparagine glycans are attached at residues asparagine 69 and asparagine 135. A coiled-coil region spans residues 85-135 (RRSEKSAQESQKELKEMIETLAHKLDEKSKKLMELHRQNLNLQEVLKEAAN). Cystine bridges form between cysteine 140–cysteine 151, cysteine 168–cysteine 260, and cysteine 239–cysteine 252. Residues 147–261 (HEENCYQFSS…CILTAFSICQ (115 aa)) form the C-type lectin domain.

Homodimer; disulfide-linked. May form a hexamer composed of 3 homodimers. Interacts with HSP70. In terms of processing, N-glycosylated. Highly expressed in endothelial cells, aortic intima and lung. Expressed at low level in other tissues.

The protein localises to the cell membrane. The protein resides in the membrane raft. It is found in the secreted. Its function is as follows. Receptor that mediates the recognition, internalization and degradation of oxidatively modified low density lipoprotein (oxLDL) by vascular endothelial cells. OxLDL is a marker of atherosclerosis that induces vascular endothelial cell activation and dysfunction, resulting in pro-inflammatory responses, pro-oxidative conditions and apoptosis. Its association with oxLDL induces the activation of NF-kappa-B through an increased production of intracellular reactive oxygen and a variety of pro-atherogenic cellular responses including a reduction of nitric oxide (NO) release, monocyte adhesion and apoptosis. In addition to binding oxLDL, it acts as a receptor for the HSP70 protein involved in antigen cross-presentation to naive T-cells in dendritic cells, thereby participating in cell-mediated antigen cross-presentation. Also involved in inflammatory process, by acting as a leukocyte-adhesion molecule at the vascular interface in endotoxin-induced inflammation. Also acts as a receptor for advanced glycation end (AGE) products, activated platelets, monocytes, apoptotic cells and both Gram-negative and Gram-positive bacteria. The sequence is that of Oxidized low-density lipoprotein receptor 1 (OLR1) from Bos taurus (Bovine).